The primary structure comprises 178 residues: Fatty-acid and retinol-binding protein 1 (178 aa).

An N-terminal signal peptide occupies residues 1–16; the sequence is MYHQLILMALIGVIMA. N-linked (GlcNAc...) asparagine glycans are attached at residues asparagine 44 and asparagine 75. Coiled coils occupy residues 67–89 and 123–154; these read DAALEALKNKSDKLYQKAVELRN and KLDMEKIKQAARDIIAKYEALNEETKEELKAT. N-linked (GlcNAc...) asparagine glycosylation occurs at asparagine 157.

The protein belongs to the fatty-acid and retinol-binding protein (FARBP) family. In terms of processing, N-glycosylated.

Its subcellular location is the secreted. Its function is as follows. Binds retinol and different fatty acids. In Onchocerca gutturosa, this protein is Fatty-acid and retinol-binding protein 1.